Here is a 548-residue protein sequence, read N- to C-terminus: Membrane protein insertase YidC (548 aa).

The chain crosses the membrane as a helical span at residues 6–26; it reads NLLVIALLFVSFMIWQAWEQD. A disordered region spans residues 28 to 56; that stretch reads NPQPQTQQTTQTTTTAAGSAADQGVPASG. Over residues 29–42 the composition is skewed to low complexity; the sequence is PQPQTQQTTQTTTT. A run of 4 helical transmembrane segments spans residues 350 to 370, 424 to 444, 458 to 478, and 499 to 519; these read FVGN…GIMY, FPLI…MGSI, LSAQ…MFFI, and PVIF…YYIV.

This sequence belongs to the OXA1/ALB3/YidC family. Type 1 subfamily. Interacts with the Sec translocase complex via SecD. Specifically interacts with transmembrane segments of nascent integral membrane proteins during membrane integration.

It is found in the cell inner membrane. Functionally, required for the insertion and/or proper folding and/or complex formation of integral membrane proteins into the membrane. Involved in integration of membrane proteins that insert both dependently and independently of the Sec translocase complex, as well as at least some lipoproteins. Aids folding of multispanning membrane proteins. The chain is Membrane protein insertase YidC from Salmonella enteritidis PT4 (strain P125109).